Reading from the N-terminus, the 302-residue chain is Cyclopropane mycolic acid synthase 2 (302 aa).

S-adenosyl-L-methionine-binding positions include 41-42, 76-84, 102-107, and 131-132; these read YS, LLDIGCGWG, TLSENQ, and WE. Residue cysteine 284 is part of the active site.

This sequence belongs to the CFA/CMAS family. In terms of assembly, homodimer.

The protein localises to the cytoplasm. It catalyses the reaction a 1-acyl-2-(9Z)-enoyl-sn-glycero-3-phospholipid + S-adenosyl-L-methionine = a 1-acyl-2-(9-cyclopronane)-acyl-sn-glycero-3-phospholipid + S-adenosyl-L-homocysteine + H(+). The protein operates within lipid metabolism; mycolic acid biosynthesis. Catalyzes the formation of trans cyclopropanated ketomycolate or methoxymycolate through the conversion of a double bond to a cyclopropane ring at the proximal position of an oxygenated mycolic acid via the transfer of a methylene group from S-adenosyl-L-methionine. In the absence of MmaA2, CmaA2 has a non-specific cis-cyclopropanating activity and is able to catalyze the conversion of a double bond to a cis cyclopropane ring at the distal position of an alpha mycolic acid. Cyclopropanated mycolic acids are key factors participating in cell envelope permeability, host immunomodulation and persistence. The protein is Cyclopropane mycolic acid synthase 2 (cmaA2) of Mycobacterium bovis (strain ATCC BAA-935 / AF2122/97).